The primary structure comprises 235 residues: Ribonuclease PH (235 aa).

Phosphate contacts are provided by residues Arg-86 and 124–126 (GTR).

It belongs to the RNase PH family. Homohexameric ring arranged as a trimer of dimers.

It catalyses the reaction tRNA(n+1) + phosphate = tRNA(n) + a ribonucleoside 5'-diphosphate. Phosphorolytic 3'-5' exoribonuclease that plays an important role in tRNA 3'-end maturation. Removes nucleotide residues following the 3'-CCA terminus of tRNAs; can also add nucleotides to the ends of RNA molecules by using nucleoside diphosphates as substrates, but this may not be physiologically important. Probably plays a role in initiation of 16S rRNA degradation (leading to ribosome degradation) during starvation. The chain is Ribonuclease PH from Francisella tularensis subsp. tularensis (strain FSC 198).